The following is a 396-amino-acid chain: Serine/threonine-protein kinase 32A (396 aa).

Glycine 2 carries N-myristoyl glycine lipidation. Residues 23–281 (FEILRAIGKG…LSDVQNFPYM (259 aa)) enclose the Protein kinase domain. Residues 29–37 (IGKGSFGKV) and lysine 52 each bind ATP. The Proton acceptor role is filled by aspartate 146. Residues 373–396 (KRQPNLALEQTKDPQGEDGQNNNL) form a disordered region.

Belongs to the protein kinase superfamily. Ser/Thr protein kinase family. It depends on Mg(2+) as a cofactor.

The protein resides in the cell membrane. It catalyses the reaction L-seryl-[protein] + ATP = O-phospho-L-seryl-[protein] + ADP + H(+). It carries out the reaction L-threonyl-[protein] + ATP = O-phospho-L-threonyl-[protein] + ADP + H(+). The chain is Serine/threonine-protein kinase 32A (STK32A) from Homo sapiens (Human).